A 273-amino-acid chain; its full sequence is Putative peptidyl-prolyl cis-trans isomerase Cbf2 (273 aa).

An N-terminal signal peptide occupies residues 1-21 (MKKFSLVAAALIAGVALNVNA). A PpiC domain is found at 131–228 (PARVQAKHIL…FGYHVILKEN (98 aa)).

The enzyme catalyses [protein]-peptidylproline (omega=180) = [protein]-peptidylproline (omega=0). The chain is Putative peptidyl-prolyl cis-trans isomerase Cbf2 (cbf2) from Campylobacter jejuni subsp. jejuni serotype O:23/36 (strain 81-176).